We begin with the raw amino-acid sequence, 306 residues long: Glutaminase (306 aa).

Residues Ser66, Asn116, Glu159, Asn166, Tyr190, Tyr242, and Val260 each coordinate substrate.

Belongs to the glutaminase family. As to quaternary structure, homotetramer.

It catalyses the reaction L-glutamine + H2O = L-glutamate + NH4(+). The protein is Glutaminase of Caulobacter vibrioides (strain ATCC 19089 / CIP 103742 / CB 15) (Caulobacter crescentus).